The chain runs to 101 residues: Large ribosomal subunit protein eL30 (101 aa).

The protein belongs to the eukaryotic ribosomal protein eL30 family.

This is Large ribosomal subunit protein eL30 (rpl30e) from Thermococcus celer.